The sequence spans 313 residues: MAGENHTTLPEFLLLGFSDLKALQGPLFWVVLLVYLVTLLGNSLIILLTQVSPALHSPMYFFLRQLSVVELFYTTDIVPRTLANLGSPHPQAISFQGCAAQMYVFIVLGISECCLLTAMAYDRYVAICQPLRYSTLLSPRACMAMVGTSWLTGIITATTHASLIFSLPFRSHPIIPHFLCDILPVLRLASAGKHRSEISVMTATIVFIMIPFSLIVTSYIRILGAILAMASTQSRRKVFSTCSSHLLVVSLFFGTASITYIRPQAGSSVTTDRVLSLFYTVITPMLNPIIYTLRNKDVRRALRHLVKRQRPSP.

At 1–25 the chain is on the extracellular side; sequence MAGENHTTLPEFLLLGFSDLKALQG. The N-linked (GlcNAc...) asparagine glycan is linked to Asn5. The chain crosses the membrane as a helical span at residues 26-46; sequence PLFWVVLLVYLVTLLGNSLII. Over 47–54 the chain is Cytoplasmic; the sequence is LLTQVSPA. A helical membrane pass occupies residues 55-75; the sequence is LHSPMYFFLRQLSVVELFYTT. The Extracellular segment spans residues 76–100; that stretch reads DIVPRTLANLGSPHPQAISFQGCAA. The helical transmembrane segment at 101-121 threads the bilayer; the sequence is QMYVFIVLGISECCLLTAMAY. The Cytoplasmic segment spans residues 122 to 140; it reads DRYVAICQPLRYSTLLSPR. Residues 141–161 traverse the membrane as a helical segment; that stretch reads ACMAMVGTSWLTGIITATTHA. Residues 162 to 198 are Extracellular-facing; it reads SLIFSLPFRSHPIIPHFLCDILPVLRLASAGKHRSEI. The helical transmembrane segment at 199-218 threads the bilayer; the sequence is SVMTATIVFIMIPFSLIVTS. The Cytoplasmic portion of the chain corresponds to 219 to 238; sequence YIRILGAILAMASTQSRRKV. A helical membrane pass occupies residues 239 to 259; it reads FSTCSSHLLVVSLFFGTASIT. The Extracellular portion of the chain corresponds to 260 to 272; that stretch reads YIRPQAGSSVTTD. A helical membrane pass occupies residues 273–293; sequence RVLSLFYTVITPMLNPIIYTL. Residues 294-313 are Cytoplasmic-facing; sequence RNKDVRRALRHLVKRQRPSP.

This sequence belongs to the G-protein coupled receptor 1 family.

The protein resides in the cell membrane. Odorant receptor. The sequence is that of Olfactory receptor 10P1 (OR10P1) from Homo sapiens (Human).